Consider the following 87-residue polypeptide: UPF0175 protein AF_0597 (87 aa).

Belongs to the UPF0175 family.

This chain is UPF0175 protein AF_0597, found in Archaeoglobus fulgidus (strain ATCC 49558 / DSM 4304 / JCM 9628 / NBRC 100126 / VC-16).